Consider the following 494-residue polypeptide: Cobyric acid synthase (494 aa).

The region spanning 248-445 (ELEIAVLKLP…LHGIFDNGPW (198 aa)) is the GATase cobBQ-type domain. The active-site Nucleophile is C329. H437 is a catalytic residue.

The protein belongs to the CobB/CobQ family. CobQ subfamily.

Its pathway is cofactor biosynthesis; adenosylcobalamin biosynthesis. Functionally, catalyzes amidations at positions B, D, E, and G on adenosylcobyrinic A,C-diamide. NH(2) groups are provided by glutamine, and one molecule of ATP is hydrogenolyzed for each amidation. This is Cobyric acid synthase from Synechococcus sp. (strain WH7803).